Consider the following 346-residue polypeptide: Tripartite motif-containing protein 44 (346 aa).

Residues 68-167 (TPPASGGDDA…ETEAESEFDP (100 aa)) form a disordered region. The span at 89–167 (EGEVESEVGE…ETEAESEFDP (79 aa)) shows a compositional bias: acidic residues. A B box-type zinc finger spans residues 176-217 (VAKRKCPDHGLDLSTYCQEDRQLICVLCPVIGAHRGHQLSTL). The Zn(2+) site is built by Cys-181, His-184, Cys-203, and His-209. Positions 292–327 (AHVTEILADIQSHMDRLMTQMAQAKEQLDTSNESAE) form a coiled coil. Residues 313-346 (AQAKEQLDTSNESAEPKAEGDEEGPSGASEEEDT) are disordered. Residues 332-346 (GDEEGPSGASEEEDT) show a composition bias toward acidic residues. A phosphoserine mark is found at Ser-338 and Ser-341.

In terms of assembly, interacts (via coiled coil) with TRIM17 (via coiled coil). Expressed mainly in brain with high level in cerebral hemispheres and cerebellum. Lower expression in kidney, lung and spleen. In brain is detected in the hippocampus, thalamic and pretectal nuclei, substantia nigra, the dorsal part of the medulla, the cerebellum, in the olfactory nucleus, other cortical areas apart from hippocampus and the striatum. Indeed expression is confined in neuronal somata namely in the CA3 region and dentate gyrus of the hippocampus, caudate-putamen, parabranchial nucleus, olfactory nucleus, cortex, deep cerebellar nuclei and thalamus. Also highly expressed in the spleen. thymus and testis.

Functionally, may play a role in the process of differentiation and maturation of neuronal cells. May regulate the activity of TRIM17. Is a negative regulator of PAX6 expression. The chain is Tripartite motif-containing protein 44 (Trim44) from Mus musculus (Mouse).